The primary structure comprises 246 residues: Acetylglutamate kinase (246 aa).

Substrate is bound by residues 30–31 (GG), Arg-52, and Asn-151.

Belongs to the acetylglutamate kinase family. ArgB subfamily.

Its subcellular location is the cytoplasm. It catalyses the reaction N-acetyl-L-glutamate + ATP = N-acetyl-L-glutamyl 5-phosphate + ADP. It functions in the pathway amino-acid biosynthesis; L-arginine biosynthesis; N(2)-acetyl-L-ornithine from L-glutamate: step 2/4. In terms of biological role, catalyzes the ATP-dependent phosphorylation of N-acetyl-L-glutamate. This Methanopyrus kandleri (strain AV19 / DSM 6324 / JCM 9639 / NBRC 100938) protein is Acetylglutamate kinase.